Consider the following 486-residue polypeptide: 3-dehydroshikimate dehydratase (486 aa).

The enzyme catalyses 3-dehydroshikimate = 3,4-dihydroxybenzoate + H2O. It participates in aromatic compound metabolism; 3,4-dihydroxybenzoate biosynthesis; 3,4-dihydroxybenzoate from 3-dehydroquinate: step 2/2. Its function is as follows. Converts dehydroshikimate to protocatechuate. In Acinetobacter baylyi (strain ATCC 33305 / BD413 / ADP1), this protein is 3-dehydroshikimate dehydratase (quiC).